Here is a 329-residue protein sequence, read N- to C-terminus: Ketol-acid reductoisomerase (NADP(+)) (329 aa).

The KARI N-terminal Rossmann domain maps to 2–182 (ARMYYEKDVD…GATRAGVLET (181 aa)). Residues 25 to 28 (YGSQ), serine 51, serine 53, and 83 to 86 (DEKQ) each bind NADP(+). Histidine 108 is a catalytic residue. Glycine 134 contacts NADP(+). The 146-residue stretch at 183–328 (TFKEETETDL…RNLRSMMSFL (146 aa)) folds into the KARI C-terminal knotted domain. Residues aspartate 191, glutamate 195, glutamate 227, and glutamate 231 each coordinate Mg(2+). Substrate is bound at residue serine 252.

Belongs to the ketol-acid reductoisomerase family. Requires Mg(2+) as cofactor.

The catalysed reaction is (2R)-2,3-dihydroxy-3-methylbutanoate + NADP(+) = (2S)-2-acetolactate + NADPH + H(+). It carries out the reaction (2R,3R)-2,3-dihydroxy-3-methylpentanoate + NADP(+) = (S)-2-ethyl-2-hydroxy-3-oxobutanoate + NADPH + H(+). It functions in the pathway amino-acid biosynthesis; L-isoleucine biosynthesis; L-isoleucine from 2-oxobutanoate: step 2/4. Its pathway is amino-acid biosynthesis; L-valine biosynthesis; L-valine from pyruvate: step 2/4. Its function is as follows. Involved in the biosynthesis of branched-chain amino acids (BCAA). Catalyzes an alkyl-migration followed by a ketol-acid reduction of (S)-2-acetolactate (S2AL) to yield (R)-2,3-dihydroxy-isovalerate. In the isomerase reaction, S2AL is rearranged via a Mg-dependent methyl migration to produce 3-hydroxy-3-methyl-2-ketobutyrate (HMKB). In the reductase reaction, this 2-ketoacid undergoes a metal-dependent reduction by NADPH to yield (R)-2,3-dihydroxy-isovalerate. The polypeptide is Ketol-acid reductoisomerase (NADP(+)) (Clostridioides difficile (strain 630) (Peptoclostridium difficile)).